Consider the following 322-residue polypeptide: TATA box-binding protein-like 2 (322 aa).

Residues 31–54 (PALSSTQDSTYLSGRAGPSRESGA) form a disordered region. Polar residues predominate over residues 32–42 (ALSSTQDSTYL).

The protein belongs to the TBP family.

It is found in the nucleus. Its function is as follows. TATA box-binding transcription factor. Members of the TBP family are differentially required to regulate transcription and development during early embryogenesis. The sequence is that of TATA box-binding protein-like 2 from Takifugu rubripes (Japanese pufferfish).